We begin with the raw amino-acid sequence, 380 residues long: Cytochrome b (380 aa).

4 helical membrane passes run 34-54, 78-99, 114-134, and 179-199; these read FGSLLGVCLLTQILTGLLLAM, WLIRNLHANGASFFFICIYLHI, WNTGVILLLTLMATAFVGYVL, and FFALHFLLPFMIAGLTLIHLT. Heme b contacts are provided by His84 and His98. Heme b is bound by residues His183 and His197. His202 provides a ligand contact to a ubiquinone. The next 4 membrane-spanning stretches (helical) occupy residues 227-247, 289-309, 321-341, and 348-368; these read LKDILGFMLMFLPLTTLALFS, LGGVLALAASVLVLFLAPFLH, LSQLLFWILVANLFILTWVGS, and FIIIGQLASLTYFTILLILFP.

The protein belongs to the cytochrome b family. The cytochrome bc1 complex contains 11 subunits: 3 respiratory subunits (MT-CYB, CYC1 and UQCRFS1), 2 core proteins (UQCRC1 and UQCRC2) and 6 low-molecular weight proteins (UQCRH/QCR6, UQCRB/QCR7, UQCRQ/QCR8, UQCR10/QCR9, UQCR11/QCR10 and a cleavage product of UQCRFS1). This cytochrome bc1 complex then forms a dimer. The cofactor is heme b.

It localises to the mitochondrion inner membrane. Functionally, component of the ubiquinol-cytochrome c reductase complex (complex III or cytochrome b-c1 complex) that is part of the mitochondrial respiratory chain. The b-c1 complex mediates electron transfer from ubiquinol to cytochrome c. Contributes to the generation of a proton gradient across the mitochondrial membrane that is then used for ATP synthesis. The protein is Cytochrome b (MT-CYB) of Calonectris leucomelas (Streaked shearwater).